We begin with the raw amino-acid sequence, 155 residues long: 6,7-dimethyl-8-ribityllumazine synthase (155 aa).

5-amino-6-(D-ribitylamino)uracil-binding positions include Phe22, Ala56–Glu58, and Ala80–Ile82. A (2S)-2-hydroxy-3-oxobutyl phosphate-binding site is contributed by Asn85–Thr86. The active-site Proton donor is the His88. A 5-amino-6-(D-ribitylamino)uracil-binding site is contributed by Phe113. (2S)-2-hydroxy-3-oxobutyl phosphate is bound at residue Arg127.

It belongs to the DMRL synthase family.

The catalysed reaction is (2S)-2-hydroxy-3-oxobutyl phosphate + 5-amino-6-(D-ribitylamino)uracil = 6,7-dimethyl-8-(1-D-ribityl)lumazine + phosphate + 2 H2O + H(+). The protein operates within cofactor biosynthesis; riboflavin biosynthesis; riboflavin from 2-hydroxy-3-oxobutyl phosphate and 5-amino-6-(D-ribitylamino)uracil: step 1/2. Functionally, catalyzes the formation of 6,7-dimethyl-8-ribityllumazine by condensation of 5-amino-6-(D-ribitylamino)uracil with 3,4-dihydroxy-2-butanone 4-phosphate. This is the penultimate step in the biosynthesis of riboflavin. The sequence is that of 6,7-dimethyl-8-ribityllumazine synthase from Streptococcus pneumoniae serotype 2 (strain D39 / NCTC 7466).